A 528-amino-acid chain; its full sequence is GMP synthase [glutamine-hydrolyzing] (528 aa).

A Glutamine amidotransferase type-1 domain is found at 13 to 204 (SIVILDFGSQ…VHNICRSKPD (192 aa)). Cysteine 90 (nucleophile) is an active-site residue. Active-site residues include histidine 178 and glutamate 180. One can recognise a GMPS ATP-PPase domain in the interval 205–403 (WTTNTFIDEA…LGLPEEIVNR (199 aa)). 232 to 238 (SGGVDSS) provides a ligand contact to ATP.

In terms of assembly, homodimer.

The enzyme catalyses XMP + L-glutamine + ATP + H2O = GMP + L-glutamate + AMP + diphosphate + 2 H(+). It participates in purine metabolism; GMP biosynthesis; GMP from XMP (L-Gln route): step 1/1. In terms of biological role, catalyzes the synthesis of GMP from XMP. The polypeptide is GMP synthase [glutamine-hydrolyzing] (Prochlorococcus marinus (strain SARG / CCMP1375 / SS120)).